Reading from the N-terminus, the 437-residue chain is Peptidyl-prolyl cis-trans isomerase CYP38, chloroplastic (437 aa).

The N-terminal 36 residues, 1–36 (MAAAFASLPTFSVVNSSRFPRRRIGFSCSKKPLEVR), are a transit peptide targeting the chloroplast. The transit peptide at 37 to 92 (CSSGNTRYTKQRGAFTSLKECAISLALSVGLMVSVPSIALPPNAHAVANPVIPDVS) directs the protein to the thylakoid. The PPIase cyclophilin-type domain occupies 245-437 (VKIKDNPNIE…LANPSYKIAG (193 aa)).

Ubiquitous. Lower levels of expression in roots.

It is found in the plastid. The protein localises to the chloroplast thylakoid lumen. It catalyses the reaction [protein]-peptidylproline (omega=180) = [protein]-peptidylproline (omega=0). In terms of biological role, required for the assembly and stabilization of PSII, but has no PPIases activity. The polypeptide is Peptidyl-prolyl cis-trans isomerase CYP38, chloroplastic (CYP38) (Arabidopsis thaliana (Mouse-ear cress)).